Consider the following 2249-residue polypeptide: Outer membrane protein A (2249 aa).

A signal peptide spans 1 to 28 (MANISPKLFKKAIQQGLKAALFTTSTAA). One copy of the Type I 1 repeat lies at 212 to 286 (IGNTNALATV…NGALSQVTGD (75 aa)). The segment at 212 to 1180 (IGNTNALATV…ALATVNVGAG (969 aa)) is 14 X approximate tandem repeats. Type II repeat units follow at residues 287–358 (IGNT…VTGN) and 359–430 (VGNT…VTGD). One copy of the Type I 2 repeat lies at 431–505 (IGNTNALATV…NGALSQVTGN (75 aa)). One copy of the Type II 3 repeat lies at 506–577 (IGNTNSLATI…FTGNSTVTGD (72 aa)). Residues 578-652 (IGNTNSLATI…NGALSQVTGD (75 aa)) form a Type I 3 repeat. The stretch at 653–724 (IGNTNSLATI…FTGNSTVTGD (72 aa)) is one Type II 4 repeat. Type I repeat units follow at residues 725 to 799 (IGNT…VTGD), 800 to 874 (IGNT…VTGD), and 875 to 949 (IGNT…VTGD). Type II repeat units follow at residues 950-1021 (IGNT…VTGN), 1022-1093 (VGNT…VTGN), and 1094-1165 (VGNT…VTGD). The stretch at 1166 to 1180 (IGNTNALATVNVGAG) is one Type I 7; truncated repeat. The 288-residue stretch at 1962–2249 (DMDAKFGAWI…QGSVKVRVNF (288 aa)) folds into the Autotransporter domain.

It belongs to the rickettsiae OmpA/OmpB family. Post-translationally, glycosylated.

The protein localises to the periplasm. The protein resides in the secreted. It is found in the cell surface. Its subcellular location is the cell outer membrane. Elicits protective immunity. The sequence is that of Outer membrane protein A (ompA) from Rickettsia rickettsii.